Consider the following 431-residue polypeptide: Adenylosuccinate synthetase (431 aa).

Residues 12 to 18 (GDEGKGK) and 40 to 42 (GHT) each bind GTP. The active-site Proton acceptor is aspartate 13. Residues aspartate 13 and glycine 40 each coordinate Mg(2+). IMP-binding positions include 13–16 (DEGK), 38–41 (NAGH), threonine 128, arginine 142, glutamine 223, threonine 238, and arginine 301. Catalysis depends on histidine 41, which acts as the Proton donor. 297-303 (TVTGRPR) provides a ligand contact to substrate. GTP contacts are provided by residues arginine 303, 329–331 (SID), and 411–413 (SVG).

This sequence belongs to the adenylosuccinate synthetase family. In terms of assembly, homodimer. Mg(2+) serves as cofactor.

The protein resides in the cytoplasm. The enzyme catalyses IMP + L-aspartate + GTP = N(6)-(1,2-dicarboxyethyl)-AMP + GDP + phosphate + 2 H(+). The protein operates within purine metabolism; AMP biosynthesis via de novo pathway; AMP from IMP: step 1/2. Its function is as follows. Plays an important role in the de novo pathway of purine nucleotide biosynthesis. Catalyzes the first committed step in the biosynthesis of AMP from IMP. The chain is Adenylosuccinate synthetase from Lacticaseibacillus paracasei (strain ATCC 334 / BCRC 17002 / CCUG 31169 / CIP 107868 / KCTC 3260 / NRRL B-441) (Lactobacillus paracasei).